Reading from the N-terminus, the 359-residue chain is Endosome-associated-trafficking regulator 1 (359 aa).

Serine 18 and serine 74 each carry phosphoserine. The interval 100–125 is required for interaction with PTPN13; it reads LLDEDEDEEDGWNGAYLPSAMEQTHS. Residues 153–180 form a disordered region; it reads SLPPWTLSDSDSRISPTGSPSADFTAHG. Positions 159-174 are enriched in polar residues; sequence LSDSDSRISPTGSPSA. Phosphoserine occurs at positions 167 and 171. The stretch at 185 to 295 forms a coiled coil; it reads DRHLRTLQIS…FKRENEALRS (111 aa).

The protein belongs to the ENTR1 family. As to quaternary structure, found in a complex with ENTR1, PTPN13 and GIT1. Interacts with PTPN13 (via the FERM domain). Interacts (via N-terminus) with GIT1 (via N- and C-terminus); this interaction is direct. Interacts with NOD2. Interacts (via N-terminus) with IFT88. Interacts with VPS35. In terms of processing, phosphorylated.

The protein localises to the cytoplasm. The protein resides in the early endosome. It is found in the endosome. Its subcellular location is the recycling endosome. It localises to the midbody. The protein localises to the cytoskeleton. The protein resides in the microtubule organizing center. It is found in the centrosome. Its subcellular location is the cilium basal body. Functionally, endosome-associated protein that plays a role in membrane receptor sorting, cytokinesis and ciliogenesis. Involved in the endosome-to-plasma membrane trafficking and recycling of SNX27-retromer-dependent cargo proteins, such as GLUT1. Involved in the regulation of cytokinesis; the function may involve PTPN13 and GIT1. Plays a role in the formation of cilia. Involved in cargo protein localization, such as PKD2, at primary cilia. Involved in the presentation of the tumor necrosis factor (TNF) receptor TNFRSF1A on the cell surface, and hence in the modulation of the TNF-induced apoptosis. In Bos taurus (Bovine), this protein is Endosome-associated-trafficking regulator 1.